The sequence spans 424 residues: Phosphomethylpyrimidine synthase (424 aa).

Substrate contacts are provided by residues Asn66, Met95, Tyr124, His163, 185–187 (SRG), 226–229 (DGMR), and Glu265. Zn(2+) is bound at residue His269. Phe292 is a binding site for substrate. His333 provides a ligand contact to Zn(2+). 3 residues coordinate [4Fe-4S] cluster: Cys408, Cys411, and Cys415.

It belongs to the ThiC family. The cofactor is [4Fe-4S] cluster.

The enzyme catalyses 5-amino-1-(5-phospho-beta-D-ribosyl)imidazole + S-adenosyl-L-methionine = 4-amino-2-methyl-5-(phosphooxymethyl)pyrimidine + CO + 5'-deoxyadenosine + formate + L-methionine + 3 H(+). The protein operates within cofactor biosynthesis; thiamine diphosphate biosynthesis. In terms of biological role, catalyzes the synthesis of the hydroxymethylpyrimidine phosphate (HMP-P) moiety of thiamine from aminoimidazole ribotide (AIR) in a radical S-adenosyl-L-methionine (SAM)-dependent reaction. The chain is Phosphomethylpyrimidine synthase from Thermotoga sp. (strain RQ2).